The primary structure comprises 115 residues: Cyclin-dependent protein kinase inhibitor SMR3 (115 aa).

Residues 17-36 (KIRLPTRPELDIPDSDHEDP) are compositionally biased toward basic and acidic residues. Residues 17–82 (KIRLPTRPEL…RSSGTKRKLT (66 aa)) form a disordered region. Residues 67–81 (RKPKPNRSSGTKRKL) are compositionally biased toward basic residues.

Interacts with CDKA-1 and D-type cyclins. As to expression, expressed at low levels in roots and stems.

The protein localises to the nucleus. Its function is as follows. Probable cyclin-dependent protein kinase (CDK) inhibitor that functions as a repressor of mitosis in the endoreduplication cell cycle. The polypeptide is Cyclin-dependent protein kinase inhibitor SMR3 (Arabidopsis thaliana (Mouse-ear cress)).